A 405-amino-acid polypeptide reads, in one-letter code: Envelope glycoprotein G (405 aa).

A signal peptide spans 1 to 19 (MLAVGATLCLLSFLTGATG). N-linked (GlcNAc...) asparagine; by host glycosylation is found at Asn83, Asn138, Asn174, Asn221, and Asn288. Residues 389-405 (LKTVYICLALIGLAHVP) traverse the membrane as a helical segment.

It belongs to the alphaherpesvirinae glycoprotein G family.

It localises to the virion membrane. Functionally, chemokine-binding protein that inhibits neutrophils' chemotaxis. This is Envelope glycoprotein G (gG) from Equine herpesvirus 4 (strain 1942) (EHV-4).